The primary structure comprises 724 residues: Probable zinc transporter MSC2 (724 aa).

The Cytoplasmic portion of the chain corresponds to 1–6; sequence MNLQEL. A helical membrane pass occupies residues 7-27; sequence LAKVPLLLSYPTIILSSNLIV. Topologically, residues 28–58 are lumenal; that stretch reads PSHNDLISRAASTSAAEYADEKLIFFSTDHA. The chain crosses the membrane as a helical span at residues 59 to 79; the sequence is IRLIFLPTFVASSFNLFAHYF. At 80-90 the chain is on the cytoplasmic side; the sequence is NFINYSSRRKY. The helical transmembrane segment at 91–111 threads the bilayer; it reads YVLFTAIYFLSILTAIFHPIQ. The Lumenal segment spans residues 112-134; the sequence is STCITLLIIKLLTTADESSPKIA. A helical membrane pass occupies residues 135–155; it reads LNFKTILKTFVPFITLTLVIL. Topologically, residues 156–174 are cytoplasmic; the sequence is RWDPSFDASSGDVNKISTS. Residues 175–195 traverse the membrane as a helical segment; sequence LAAYALLILTLRYASPLILST. Residues 196–219 lie on the Lumenal side of the membrane; the sequence is LSSSIGVVSKDTSVAQHSISRNKR. The chain crosses the membrane as a helical span at residues 220 to 240; it reads FPLILVLPIFSFVLLYLMTIV. At 241–244 the chain is on the cytoplasmic side; that stretch reads NKTY. The helical transmembrane segment at 245-265 threads the bilayer; the sequence is NIQLLMVFVFFGCLSIFFLSL. Residues 266 to 298 are Lumenal-facing; that stretch reads KDLFTEDGNQKKGGQEDEYCRMFDIKYMISYLW. Residues 299–319 traverse the membrane as a helical segment; the sequence is LTRFTILLTGIMAIVVHFLSF. Over 320 to 386 the chain is Cytoplasmic; it reads NEITSSIKTD…KQMALNKDTR (67 aa). The helical transmembrane segment at 387–407 threads the bilayer; it reads SIFSFLLLNTAFMFVQLLYSF. Residues 408 to 417 lie on the Lumenal side of the membrane; it reads RSKSLGLLSD. The chain crosses the membrane as a helical span at residues 418–438; it reads SLHMALDCTSLLLGLIAGVLT. Over 439–453 the chain is Cytoplasmic; that stretch reads KKPASDKFPFGLNYL. The chain crosses the membrane as a helical span at residues 454–474; sequence GTLAGFTNGVLLLGIVCGIFV. At 475-491 the chain is on the lumenal side; the sequence is EAIERIFNPIHLHATNE. Residues 492 to 512 form a helical membrane-spanning segment; that stretch reads LLVVATLGLLVNLVGLFAFDH. The Cytoplasmic segment spans residues 513–528; it reads GAHDHGGTDNENMKGI. The helical transmembrane segment at 529–549 threads the bilayer; sequence FLHILADTLGSVGVVISTLLI. The Lumenal portion of the chain corresponds to 550–563; that stretch reads KLTHWPIFDPIASL. Residues 564–584 form a helical membrane-spanning segment; it reads LIGSLILLSALPLLKSTSANI. Over 585–724 the chain is Cytoplasmic; sequence LLRLDDKKHN…NSLPLQPIAN (140 aa). Residues 614–653 are disordered; it reads TPRFWPTESGSSGHSHAHTHSHAENHSHEHHHDQKNGSQE. Residues 634-648 are compositionally biased toward basic and acidic residues; the sequence is SHAENHSHEHHHDQK.

This sequence belongs to the cation diffusion facilitator (CDF) transporter (TC 2.A.4) family. SLC30A subfamily.

It localises to the endoplasmic reticulum membrane. The protein resides in the nucleus membrane. Probably act as a zinc ion transporter moving zinc from the nucleus/endoplasmic reticulum to the cytoplasm. Involved in zinc ion homeostasis and cellular distribution. The chain is Probable zinc transporter MSC2 (MSC2) from Saccharomyces cerevisiae (strain ATCC 204508 / S288c) (Baker's yeast).